Reading from the N-terminus, the 510-residue chain is Glycerol kinase (510 aa).

Residue threonine 13 participates in ADP binding. ATP is bound by residues threonine 13 and threonine 14. Position 13 (threonine 13) interacts with sn-glycerol 3-phosphate. Arginine 17 serves as a coordination point for ADP. The sn-glycerol 3-phosphate site is built by arginine 83, glutamate 84, tyrosine 135, and aspartate 255. The glycerol site is built by arginine 83, glutamate 84, tyrosine 135, aspartate 255, and glutamine 256. The ADP site is built by threonine 277, glycine 321, glycine 421, and asparagine 425. Threonine 277, glycine 321, and glycine 421 together coordinate ATP.

This sequence belongs to the FGGY kinase family.

The catalysed reaction is glycerol + ATP = sn-glycerol 3-phosphate + ADP + H(+). It functions in the pathway polyol metabolism; glycerol degradation via glycerol kinase pathway; sn-glycerol 3-phosphate from glycerol: step 1/1. In terms of biological role, key enzyme in the regulation of glycerol uptake and metabolism. Catalyzes the phosphorylation of glycerol to yield sn-glycerol 3-phosphate. This is Glycerol kinase from Haloquadratum walsbyi (strain DSM 16790 / HBSQ001).